The sequence spans 899 residues: Linoleate 13S-lipoxygenase 2-1, chloroplastic (899 aa).

Residues 1–40 constitute a chloroplast transit peptide; it reads MLKPQLQQSSQSTKALIPSWNTNPLFLASFPINILNKNFR. The PLAT domain maps to 78-200; the sequence is VQKQVNLNLS…DNPDKRIFFT (123 aa). One can recognise a Lipoxygenase domain in the interval 203 to 899; sequence SYLPSQTPSG…GKGVPYSISI (697 aa). Residues 252 to 287 form a disordered region; the sequence is SNNDDAKRPVLGGKELPYPRRCKTGRPRSKKDPLSE. A compositionally biased stretch (basic residues) spans 271 to 280; that stretch reads RRCKTGRPRS. Positions 557, 562, 749, 753, and 899 each coordinate Fe cation.

This sequence belongs to the lipoxygenase family. In terms of assembly, monomer. It depends on Fe cation as a cofactor. As to expression, expressed in leaves and floral buds.

The protein localises to the plastid. The protein resides in the chloroplast stroma. Its subcellular location is the chloroplast thylakoid. The catalysed reaction is (9Z,12Z)-octadecadienoate + O2 = (13S)-hydroperoxy-(9Z,11E)-octadecadienoate. It catalyses the reaction (9Z,12Z,15Z)-octadecatrienoate + O2 = (13S)-hydroperoxy-(9Z,11E,15Z)-octadecatrienoate. It functions in the pathway lipid metabolism; oxylipin biosynthesis. Its function is as follows. Plant lipoxygenase involved in a number of diverse aspects of plant physiology including growth and development, pest resistance, and senescence. May not be involved in the bulk production of jasmonate upon wounding. Catalyzes the hydroperoxidation of lipids containing a cis,cis-1,4-pentadiene structure. Linolenic acid is the preferred substrate, before linoleic and arachidonic acids. Also has some activity with phosphatidylglycerol, but not with galactolipids. In Solanum tuberosum (Potato), this protein is Linoleate 13S-lipoxygenase 2-1, chloroplastic.